The following is a 528-amino-acid chain: Ivanolysin (528 aa).

The N-terminal stretch at 1-23 is a signal peptide; that stretch reads MKKIMLLLMTLLLVSLPLAQEAQ. A run of 4 beta stranded transmembrane segments spans residues 213–226, 233–242, 311–320, and 328–340; these read ESQLVAKFGAAFKA, VNFGAISEGK, STRVKAAFDT, and KGDTELENIIQNA. A Conserved undecapeptide motif is present at residues 482–492; that stretch reads ECTGLAWEWWR. Residues 514-515 carry the Cholesterol binding motif; sequence TL.

It belongs to the cholesterol-dependent cytolysin family. In terms of assembly, homooligomeric pore complex of 35 to 50 subunits; when inserted in the host membrane.

The protein localises to the secreted. Its subcellular location is the host membrane. Its function is as follows. A cholesterol-dependent toxin that causes cytolysis by forming pores in cholesterol containing host membranes. After binding to target membranes, the protein undergoes a major conformation change, leading to its insertion in the host membrane and formation of an oligomeric pore complex. Cholesterol is required for binding to host membranes, membrane insertion and pore formation; cholesterol binding is mediated by a Thr-Leu pair in the C-terminus. Can be reversibly inactivated by oxidation. In Listeria ivanovii, this protein is Ivanolysin (ilo).